Here is a 455-residue protein sequence, read N- to C-terminus: Bifunctional protein GlmU (455 aa).

Residues 1–226 are pyrophosphorylase; sequence MSLDIVILAA…AMEVQGANDR (226 aa). UDP-N-acetyl-alpha-D-glucosamine is bound by residues 8 to 11, Lys22, Gln73, 78 to 79, 99 to 101, Gly136, Glu151, Asn166, and Asn224; these read LAAG, GT, and YGD. Asp101 contributes to the Mg(2+) binding site. Asn224 contacts Mg(2+). Residues 227–247 form a linker region; that stretch reads RQLSELERHYQLREGRRLMAQ. An N-acetyltransferase region spans residues 248–455; the sequence is GVTLRDPARF…WKRPEKIKKS (208 aa). UDP-N-acetyl-alpha-D-glucosamine contacts are provided by Arg330 and Lys348. The Proton acceptor role is filled by His360. UDP-N-acetyl-alpha-D-glucosamine-binding residues include Tyr363 and Asn374. Acetyl-CoA contacts are provided by residues Ala377, 383-384, Ser402, Ala420, and Arg437; that span reads NY.

This sequence in the N-terminal section; belongs to the N-acetylglucosamine-1-phosphate uridyltransferase family. In the C-terminal section; belongs to the transferase hexapeptide repeat family. As to quaternary structure, homotrimer. Mg(2+) is required as a cofactor.

The protein localises to the cytoplasm. The catalysed reaction is alpha-D-glucosamine 1-phosphate + acetyl-CoA = N-acetyl-alpha-D-glucosamine 1-phosphate + CoA + H(+). It catalyses the reaction N-acetyl-alpha-D-glucosamine 1-phosphate + UTP + H(+) = UDP-N-acetyl-alpha-D-glucosamine + diphosphate. Its pathway is nucleotide-sugar biosynthesis; UDP-N-acetyl-alpha-D-glucosamine biosynthesis; N-acetyl-alpha-D-glucosamine 1-phosphate from alpha-D-glucosamine 6-phosphate (route II): step 2/2. It functions in the pathway nucleotide-sugar biosynthesis; UDP-N-acetyl-alpha-D-glucosamine biosynthesis; UDP-N-acetyl-alpha-D-glucosamine from N-acetyl-alpha-D-glucosamine 1-phosphate: step 1/1. The protein operates within bacterial outer membrane biogenesis; LPS lipid A biosynthesis. Its function is as follows. Catalyzes the last two sequential reactions in the de novo biosynthetic pathway for UDP-N-acetylglucosamine (UDP-GlcNAc). The C-terminal domain catalyzes the transfer of acetyl group from acetyl coenzyme A to glucosamine-1-phosphate (GlcN-1-P) to produce N-acetylglucosamine-1-phosphate (GlcNAc-1-P), which is converted into UDP-GlcNAc by the transfer of uridine 5-monophosphate (from uridine 5-triphosphate), a reaction catalyzed by the N-terminal domain. The sequence is that of Bifunctional protein GlmU from Pseudomonas putida (strain ATCC 700007 / DSM 6899 / JCM 31910 / BCRC 17059 / LMG 24140 / F1).